The following is a 303-amino-acid chain: Recombination-associated protein RdgC (303 aa).

Belongs to the RdgC family.

It localises to the cytoplasm. It is found in the nucleoid. Its function is as follows. May be involved in recombination. The sequence is that of Recombination-associated protein RdgC from Shewanella loihica (strain ATCC BAA-1088 / PV-4).